The primary structure comprises 99 residues: Ragulator complex protein LAMTOR4 (99 aa).

Met1 bears the N-acetylmethionine mark. Thr2 carries the post-translational modification N-acetylthreonine; in Ragulator complex protein LAMTOR4, N-terminally processed. At Ser67 the chain carries Phosphoserine; by PKA.

The protein belongs to the LAMTOR4 family. In terms of assembly, part of the Ragulator complex composed of LAMTOR1, LAMTOR2, LAMTOR3, LAMTOR4 and LAMTOR5. LAMTOR4 and LAMTOR5 form a heterodimer that interacts, through LAMTOR1, with a LAMTOR2, LAMTOR3 heterodimer. The Ragulator complex interacts with both the mTORC1 complex and heterodimers constituted of the Rag GTPases RagA/RRAGA, RagB/RRAGB, RagC/RRAGC and RagD/RRAGD; regulated by amino acid availability. The Ragulator complex interacts with SLC38A9; the probable amino acid sensor. Component of the lysosomal folliculin complex (LFC), composed of FLCN, FNIP1 (or FNIP2), RagA/RRAGA or RagB/RRAGB GDP-bound, RagC/RRAGC or RagD/RRAGD GTP-bound, and Ragulator. Phosphorylation at Ser-67 by PKA inhibits Ragulator complex assembly.

The protein resides in the lysosome. In terms of biological role, as part of the Ragulator complex it is involved in amino acid sensing and activation of mTORC1, a signaling complex promoting cell growth in response to growth factors, energy levels, and amino acids. Activated by amino acids through a mechanism involving the lysosomal V-ATPase, the Ragulator plays a dual role for the small GTPases Rag (RagA/RRAGA, RagB/RRAGB, RagC/RRAGC and/or RagD/RRAGD): it (1) acts as a guanine nucleotide exchange factor (GEF), activating the small GTPases Rag and (2) mediates recruitment of Rag GTPases to the lysosome membrane. Activated Ragulator and Rag GTPases function as a scaffold recruiting mTORC1 to lysosomes where it is in turn activated. This Homo sapiens (Human) protein is Ragulator complex protein LAMTOR4.